The following is a 227-amino-acid chain: MIVVVDDRDMVTEGYSSWFGREGITTTGFTPTDFDEWVESVPEQDIMAIEAFLIGECADQHRLPARIRERCKAPVIAVNDRPSLEHTLELFQSGVDDVVRKPVHVREILARINAIRRRAGASATSGADGTQLGPIRVFSDGRDPQINGIDFPLPRRERRILEYLIANRGRRLNKVQIFSAIYGIFDSEVEENVVESHISKLRKKLRGQLGFDPIDSKRFLGYCINIE.

Residues 1–116 form the Response regulatory domain; it reads MIVVVDDRDM…EILARINAIR (116 aa). The segment at residues 127 to 226 is a DNA-binding region (ompR/PhoB-type); the sequence is ADGTQLGPIR…KRFLGYCINI (100 aa).

Functionally, required for transcription of flagellar genes. The protein is Flagellar transcriptional regulator FtcR (ftcR) of Brucella abortus (strain 2308).